A 200-amino-acid polypeptide reads, in one-letter code: MAKVLVLYYSTYGHVEQMAYAVAEGARETGAEVVVKRVPELVPEEVARQNHFKLDQAAPVATVAELADYDAIIFGTPTRYGNMASQMKQFIDQTGGLWMKGALVGKVGSVFTSTASQHGGQETTLTSFHTVLFHHGMVVVGLPYSFQGQAGVEAVKGNTPYGASTIADGDGSRQPSAVELEGARFQGRHVAGIAAKLARD.

Positions 4–190 (VLVLYYSTYG…EGARFQGRHV (187 aa)) constitute a Flavodoxin-like domain. FMN contacts are provided by residues 10–15 (STYGHV) and 78–80 (TRY). Tyr12 provides a ligand contact to NAD(+). Substrate is bound at residue Trp98. FMN contacts are provided by residues 113–119 (STASQHG) and His134.

Belongs to the WrbA family. The cofactor is FMN.

The catalysed reaction is a quinone + NADH + H(+) = a quinol + NAD(+). It carries out the reaction a quinone + NADPH + H(+) = a quinol + NADP(+). This Methylobacterium radiotolerans (strain ATCC 27329 / DSM 1819 / JCM 2831 / NBRC 15690 / NCIMB 10815 / 0-1) protein is NAD(P)H dehydrogenase (quinone).